Here is a 146-residue protein sequence, read N- to C-terminus: Lysozyme C-2 (146 aa).

A signal peptide spans 1-18; sequence MKTLLVLALLLLSVSVQA. A C-type lysozyme domain is found at 19 to 146; that stretch reads KVYDRCEFAR…VSQYIRGCKL (128 aa). Disulfide bonds link C24/C144, C48/C132, C81/C97, and C93/C111. Catalysis depends on residues E53 and D69.

It belongs to the glycosyl hydrolase 22 family. In terms of assembly, monomer.

The protein resides in the secreted. It catalyses the reaction Hydrolysis of (1-&gt;4)-beta-linkages between N-acetylmuramic acid and N-acetyl-D-glucosamine residues in a peptidoglycan and between N-acetyl-D-glucosamine residues in chitodextrins.. Lysozymes have primarily a bacteriolytic function; those in tissues and body fluids are associated with the monocyte-macrophage system and enhance the activity of immunoagents. This is Lysozyme C-2 from Sus scrofa (Pig).